The chain runs to 1423 residues: DNA-directed RNA polymerase subunit beta' (1423 aa).

Residues C71, C73, C86, and C89 each coordinate Zn(2+). Mg(2+)-binding residues include D461, D463, and D465. Residues C815, C889, C896, and C899 each coordinate Zn(2+).

Belongs to the RNA polymerase beta' chain family. The RNAP catalytic core consists of 2 alpha, 1 beta, 1 beta' and 1 omega subunit. When a sigma factor is associated with the core the holoenzyme is formed, which can initiate transcription. It depends on Mg(2+) as a cofactor. The cofactor is Zn(2+).

It carries out the reaction RNA(n) + a ribonucleoside 5'-triphosphate = RNA(n+1) + diphosphate. Its function is as follows. DNA-dependent RNA polymerase catalyzes the transcription of DNA into RNA using the four ribonucleoside triphosphates as substrates. This is DNA-directed RNA polymerase subunit beta' from Actinobacillus pleuropneumoniae serotype 7 (strain AP76).